Consider the following 163-residue polypeptide: Nucleotide-binding protein YajQ (163 aa).

It belongs to the YajQ family.

Functionally, nucleotide-binding protein. This chain is Nucleotide-binding protein YajQ, found in Salmonella agona (strain SL483).